The following is a 216-amino-acid chain: Ribose-5-phosphate isomerase A (216 aa).

Residues 26–29 (TGST), 79–82 (DGAD), and 92–95 (KGGG) contribute to the substrate site. Residue E101 is the Proton acceptor of the active site. K119 provides a ligand contact to substrate.

The protein belongs to the ribose 5-phosphate isomerase family. In terms of assembly, homodimer.

It carries out the reaction aldehydo-D-ribose 5-phosphate = D-ribulose 5-phosphate. It functions in the pathway carbohydrate degradation; pentose phosphate pathway; D-ribose 5-phosphate from D-ribulose 5-phosphate (non-oxidative stage): step 1/1. Functionally, catalyzes the reversible conversion of ribose-5-phosphate to ribulose 5-phosphate. The polypeptide is Ribose-5-phosphate isomerase A (Legionella pneumophila (strain Paris)).